Consider the following 152-residue polypeptide: Transcriptional regulator MraZ (152 aa).

SpoVT-AbrB domains lie at 5-52 and 81-124; these read ANAV…PLPE and AVDL…NEDA.

Belongs to the MraZ family. As to quaternary structure, forms oligomers.

The protein resides in the cytoplasm. Its subcellular location is the nucleoid. This is Transcriptional regulator MraZ from Azotobacter vinelandii (strain DJ / ATCC BAA-1303).